We begin with the raw amino-acid sequence, 477 residues long: 23S rRNA (uracil(1939)-C(5))-methyltransferase RlmD (477 aa).

Positions 7 to 66 (KTENFPPDWLLVESLDLEAQGVAHRADGKVVFIKGALPFELVSANVHRKKNNWEQGVVTA) constitute a TRAM domain. Positions 79, 89, 92, and 171 each coordinate [4Fe-4S] cluster. Q280, F309, N314, E330, N365, and D386 together coordinate S-adenosyl-L-methionine. Catalysis depends on C432, which acts as the Nucleophile.

Belongs to the class I-like SAM-binding methyltransferase superfamily. RNA M5U methyltransferase family. RlmD subfamily.

It catalyses the reaction uridine(1939) in 23S rRNA + S-adenosyl-L-methionine = 5-methyluridine(1939) in 23S rRNA + S-adenosyl-L-homocysteine + H(+). In terms of biological role, catalyzes the formation of 5-methyl-uridine at position 1939 (m5U1939) in 23S rRNA. This is 23S rRNA (uracil(1939)-C(5))-methyltransferase RlmD from Albidiferax ferrireducens (strain ATCC BAA-621 / DSM 15236 / T118) (Rhodoferax ferrireducens).